Reading from the N-terminus, the 130-residue chain is Small ribosomal subunit protein uS8 (130 aa).

It belongs to the universal ribosomal protein uS8 family. In terms of assembly, part of the 30S ribosomal subunit. Contacts proteins S5 and S12.

One of the primary rRNA binding proteins, it binds directly to 16S rRNA central domain where it helps coordinate assembly of the platform of the 30S subunit. This is Small ribosomal subunit protein uS8 from Nitrosococcus oceani (strain ATCC 19707 / BCRC 17464 / JCM 30415 / NCIMB 11848 / C-107).